Here is a 262-residue protein sequence, read N- to C-terminus: Homeobox protein vent1 (262 aa).

Composition is skewed to basic and acidic residues over residues 16-26 (REEAPDGKDSV) and 44-55 (YAKEIPRRKDGQ). Residues 16–129 (REEAPDGKDS…KSPKSDLQRR (114 aa)) are disordered. Positions 58–79 (GEITSFQCSSEEARNRQFSNPS) are enriched in polar residues. A compositionally biased stretch (basic and acidic residues) spans 114–128 (DTEHRSKSPKSDLQR). The homeobox DNA-binding region spans 127-186 (QRRLRTAFTPQQITRLEQAFNKQRYLGASERKKLATSLQLSEIQVKTWFQNRRMKLKRQI).

The protein resides in the nucleus. Its function is as follows. Transcriptional repressor. Cooperates with vent2 in a ventral signaling pathway downstream of bmp4, which antagonizes the Spemann organizer and dorsal mesoderm formation, and leads to ventral mesoderm formation. Acts downstream of bmp4 to repress transcription of foxa4-B/XFD-1'. Binds to DNA with preference for the target sequence 5'-CTATT[T/C]G-3'. Also binds 5'-TGCATTTTG-3' at a lower frequency, and occasionally 5'-TTGATC-3'. Binds to the homeobox 2 (HBX2) repressor element in the promoter of the myf5 gene. Cooperates with vent2 to repress myf5 expression in the ventral domain. The protein is Homeobox protein vent1 of Xenopus tropicalis (Western clawed frog).